We begin with the raw amino-acid sequence, 143 residues long: Large-conductance mechanosensitive channel (143 aa).

The next 3 membrane-spanning stretches (helical) occupy residues 10–30 (FAIK…GAFG), 40–60 (IIMP…QKFI), and 86–106 (GNFL…FLMV).

This sequence belongs to the MscL family. Homopentamer.

It localises to the cell inner membrane. Functionally, channel that opens in response to stretch forces in the membrane lipid bilayer. May participate in the regulation of osmotic pressure changes within the cell. The polypeptide is Large-conductance mechanosensitive channel (Acinetobacter baumannii (strain ATCC 17978 / DSM 105126 / CIP 53.77 / LMG 1025 / NCDC KC755 / 5377)).